We begin with the raw amino-acid sequence, 251 residues long: Derlin-1 (251 aa).

Serine 2 is subject to N-acetylserine. Residues 2-15 (SDIGDWFRSIPAIT) lie on the Cytoplasmic side of the membrane. The helical transmembrane segment at 16 to 31 (RYWFAATVAVPLIGKL) threads the bilayer. Residues 32-69 (GIISPAYFFLWPEAFLYRFQIWRPFTATFYFPVGPGTG) lie on the Lumenal side of the membrane. A helical transmembrane segment spans residues 70-89 (FLYLVNLYFLYQYSTRLEAG). Residues 90–94 (AFDGR) are Cytoplasmic-facing. The helical transmembrane segment at 95 to 115 (PADYLFMLLFNWICIVITGLA) threads the bilayer. Residues 116 to 122 (MDMQLLM) are Lumenal-facing. Residues 123–137 (IPLIMSVLYVWAQLN) traverse the membrane as a helical segment. The Cytoplasmic portion of the chain corresponds to 138–154 (RDLIVSFWFGTRFKACY). A helical membrane pass occupies residues 155 to 166 (LPWVILGFNYII). At 167-170 (GGSV) the chain is on the lumenal side. A helical transmembrane segment spans residues 171–189 (INELIGNLVGHLYFFLMFR). Over 190–251 (YPMDLGGRNF…WGQGFRLGDQ (62 aa)) the chain is Cytoplasmic. Serine 201 carries the post-translational modification Phosphoserine. The residue at position 202 (threonine 202) is a Phosphothreonine. Phosphoserine is present on serine 226. A disordered region spans residues 229–251 (RAADQNGGGGRHNWGQGFRLGDQ). The SHP-box signature appears at 241–248 (NWGQGFRL).

This sequence belongs to the derlin family. Homotetramer. The four subunits of the tetramer are arranged in a twofold symmetry. Forms homo- and heterooligomers with DERL2 and DERL3; binding to DERL3 is poorer than that between DERL2 and DERL3. Interacts (via SHP-box motif) with VCP. Interacts with AMFR, SELENOS, SEL1L, SELENOK and SYVN1, as well as with SEL1L-SYVN1 and VCP-SELENOS protein complexes; this interaction is weaker than that observed between DERL2 and these complexes. Interacts with NGLY1 and YOD1. Does not bind to EDEM1. Interacts with DNAJB9. Interacts with RNF103. Interacts with HM13. Interacts with XBP1 isoform 1 (via luminal/ectodomain domain); the interaction obviates the need for ectodomain shedding prior HM13/SPP-mediated XBP1 isoform 1 cleavage. Interacts with the signal recognition particle/SRP and the SRP receptor; in the process of endoplasmic reticulum stress-induced pre-emptive quality control. May interact with UBXN6. Interacts with ZFAND2B; probably through VCP. Interacts with CCDC47. Interacts with C18orf32. May interact with TRAM1. Forms a complex with SVIP and VCP/p97. In terms of tissue distribution, widely expressed, with lowest levels in brain and heart.

It localises to the endoplasmic reticulum membrane. Its function is as follows. Functional component of endoplasmic reticulum-associated degradation (ERAD) for misfolded lumenal proteins. Forms homotetramers which encircle a large channel traversing the endoplasmic reticulum (ER) membrane. This allows the retrotranslocation of misfolded proteins from the ER into the cytosol where they are ubiquitinated and degraded by the proteasome. The channel has a lateral gate within the membrane which provides direct access to membrane proteins with no need to reenter the ER lumen first. May mediate the interaction between VCP and the misfolded protein. Also involved in endoplasmic reticulum stress-induced pre-emptive quality control, a mechanism that selectively attenuates the translocation of newly synthesized proteins into the endoplasmic reticulum and reroutes them to the cytosol for proteasomal degradation. By controlling the steady-state expression of the IGF1R receptor, indirectly regulates the insulin-like growth factor receptor signaling pathway. The polypeptide is Derlin-1 (Mus musculus (Mouse)).